The sequence spans 205 residues: Deoxyuridine 5'-triphosphate nucleotidohydrolase (205 aa).

Ser-54 carries the post-translational modification Phosphoserine. Substrate-binding positions include 126 to 128 (RSG), 140 to 143 (GVID), Gly-151, and 199 to 200 (FG).

It belongs to the dUTPase family. Homotrimer. It depends on Mg(2+) as a cofactor. As to expression, expressed in all tissues examined. Higher levels in heart and kidney.

The protein localises to the cytoplasm. It localises to the nucleus. The catalysed reaction is dUTP + H2O = dUMP + diphosphate + H(+). Its pathway is pyrimidine metabolism; dUMP biosynthesis; dUMP from dCTP (dUTP route): step 2/2. Its function is as follows. Catalyzes the cleavage of 2'-deoxyuridine 5'-triphosphate (dUTP) into 2'-deoxyuridine 5'-monophosphate (dUMP) and inorganic pyrophosphate and through its action efficiently prevents uracil misincorporation into DNA and at the same time provides dUMP, the substrate for de novo thymidylate biosynthesis. Inhibits peroxisome proliferator-activated receptor (PPAR) activity by binding of its N-terminal to PPAR, preventing the latter's dimerization with retinoid X receptor. Essential for embryonic development. This Rattus norvegicus (Rat) protein is Deoxyuridine 5'-triphosphate nucleotidohydrolase (Dut).